The following is a 116-amino-acid chain: MTDKYENPTSDDYMGVVMGIIMSGGNAKGLAFQAIQQAKDGKFAEAESSLNEASEQLREAHDVQTDLLTRLAQGEKIGWNLYMVHAQDHLMNAITFKDLAVEVVGQERRLQALENK.

The PTS EIIA type-3 domain maps to 11–109 (DDYMGVVMGI…AVEVVGQERR (99 aa)). H85 functions as the Tele-phosphohistidine intermediate in the catalytic mechanism. H85 carries the post-translational modification Phosphohistidine; by HPr. D88 lines the Mg(2+) pocket.

Homotrimer. Mg(2+) serves as cofactor.

In terms of biological role, the phosphoenolpyruvate-dependent sugar phosphotransferase system (sugar PTS), a major carbohydrate active transport system, catalyzes the phosphorylation of incoming sugar substrates concomitantly with their translocation across the cell membrane. Involved in galactose transport with PtcB and Lmg_0963. The chain is PTS system galactose-specific EIIA component from Lactococcus lactis subsp. cremoris (strain MG1363).